Reading from the N-terminus, the 188-residue chain is GPI-anchored hemophore ARB_01017 (188 aa).

A signal peptide spans M1 to A17. One can recognise a CFEM domain in the interval Q18–T107. Disulfide bonds link C26–C64, C30–C59, C39–C45, and C47–C80. D42 contributes to the heme binding site. Residues T95 to T163 form a disordered region. N165 is lipidated: GPI-anchor amidated asparagine. A propeptide spans A166 to A188 (removed in mature form).

It belongs to the RBT5 family. In terms of processing, the GPI-anchor is attached to the protein in the endoplasmic reticulum and serves to target the protein to the cell surface. There, the glucosamine-inositol phospholipid moiety is cleaved off and the GPI-modified mannoprotein is covalently attached via its lipidless GPI glycan remnant to the 1,6-beta-glucan of the outer cell wall layer.

Its subcellular location is the secreted. It localises to the cell wall. The protein localises to the cell membrane. Functionally, GPI-anchored cell wall protein involved in stabilizing the cell wall. The sequence is that of GPI-anchored hemophore ARB_01017 from Arthroderma benhamiae (strain ATCC MYA-4681 / CBS 112371) (Trichophyton mentagrophytes).